Reading from the N-terminus, the 269-residue chain is GTP cyclohydrolase FolE2 (269 aa).

It belongs to the GTP cyclohydrolase IV family.

It carries out the reaction GTP + H2O = 7,8-dihydroneopterin 3'-triphosphate + formate + H(+). The protein operates within cofactor biosynthesis; 7,8-dihydroneopterin triphosphate biosynthesis; 7,8-dihydroneopterin triphosphate from GTP: step 1/1. Its function is as follows. Converts GTP to 7,8-dihydroneopterin triphosphate. This Burkholderia ambifaria (strain ATCC BAA-244 / DSM 16087 / CCUG 44356 / LMG 19182 / AMMD) (Burkholderia cepacia (strain AMMD)) protein is GTP cyclohydrolase FolE2.